Reading from the N-terminus, the 424-residue chain is MTKLTLTVALVSALLASGASAQQPTGTGNGPDPRATTDLNRNQPTKSWTQWQPKATYAFSQLPDQYMGANRIESGEGGQPGGEPQSGYNTCARNTWNQDSKCQTAWINSLEDFCLWAPAEYGTVGEKERSGVAYCTTDRHGTRLIPDGTIQGAHFVRTRDYVQVTGVGDFTSILIPDGDDGGEFDPHGADDLGNPIGGIVYTTANPASNGEPFFVSEWTNFMSYNQFCLRACWGERAAAQCEHIYDVMGCRWNIPANYEPGVFETCDGDIGQLQGIYSGSTFRQGDPVTPPAHPAPSSSQCSSVSTIGHGLLARSASASTSSVETSSSSAASSAATDSSASTNSASSMTRVTNSAVSTNVGSGTGSGSGSGSGSGSGSGSGSSSGSSSSGSSSNTQGAASSASSLTISVGLAGLVAIGAAAFAL.

Residues Met-1–Ala-21 form the signal peptide. Disordered stretches follow at residues Ala-19–Lys-54, Ala-69–Thr-90, Ser-278–Val-304, and Ser-327–Ala-398. Topologically, residues Gln-22–Ser-403 are extracellular. Residues Thr-37–Lys-54 are compositionally biased toward polar residues. Low complexity-rich tracts occupy residues Ala-295–Val-304 and Ser-327–Ser-347. Residues Ser-362 to Ser-382 show a composition bias toward gly residues. Positions Ser-383 to Ala-398 are enriched in low complexity. Residues Ser-404–Leu-424 form a helical membrane-spanning segment.

The protein resides in the cell membrane. It is found in the secreted. Plays a role in the formation of the appressorium, a specialized infection structure with the purpose of penetrating the host surface, and is required for proper remodeling of the appressorium wall and vesicle secretion. In Mycosarcoma maydis (Corn smut fungus), this protein is Appressorium protein ROW1.